The primary structure comprises 598 residues: NADPH-dependent diflavin oxidoreductase 1 (598 aa).

A Flavodoxin-like domain is found at 6-150 (LLVLFGSQTG…AIDPWVGDLW (145 aa)). FMN is bound by residues 12-17 (SQTGTA), 59-62 (ATTG), 97-106 (LGDSSYAKFN), and Asp-132. The FAD-binding FR-type domain maps to 206 to 448 (LQPFLAPVIT…VRPGSLVFPK (243 aa)). Residues Arg-350, 382 to 385 (RAFS), and 416 to 419 (GLCS) contribute to the FAD site. NADP(+)-binding positions include Thr-461, 516-517 (SR), 522-526 (KVYVQ), and Asp-559. Residue Trp-597 coordinates FAD.

The protein belongs to the NADPH-dependent diflavin oxidoreductase NDOR1 family. In the N-terminal section; belongs to the flavodoxin family. It in the C-terminal section; belongs to the flavoprotein pyridine nucleotide cytochrome reductase family. In terms of assembly, interacts with CIAPIN1; as part of the cytosolic iron-sulfur (Fe-S) protein assembly (CIA) machinery. Interacts with DCPS. It depends on FAD as a cofactor. Requires FMN as cofactor.

It is found in the cytoplasm. Its subcellular location is the perinuclear region. It carries out the reaction 2 oxidized [2Fe-2S]-[protein] + NADPH = 2 reduced [2Fe-2S]-[protein] + NADP(+) + H(+). In terms of biological role, NADPH-dependent reductase which is a central component of the cytosolic iron-sulfur (Fe-S) protein assembly (CIA) machinery. Transfers electrons from NADPH via its FAD and FMN prosthetic groups to the [2Fe-2S] cluster of CIAPIN1, another key component of the CIA machinery. In turn, this reduced cluster provides electrons for assembly of cytosolic iron-sulfur cluster proteins. It can also reduce the [2Fe-2S] cluster of CISD1 and activate this protein implicated in Fe/S cluster repair. In vitro can fully activate methionine synthase/MTR in the presence of soluble cytochrome b5/CYB5A. The sequence is that of NADPH-dependent diflavin oxidoreductase 1 from Mus musculus (Mouse).